We begin with the raw amino-acid sequence, 1232 residues long: DNA topoisomerase 2 (1232 aa).

ATP contacts are provided by residues N65, N94, 122-124, 135-142, and 352-354; these read SSN, GRHGYGAK, and QNK. In terms of domain architecture, Toprim spans 432-546; the sequence is RTLIVTEGDS…SLLNRNPGFI (115 aa). The Mg(2+) site is built by E438, D515, and D517. Residues 681–1097 enclose the Topo IIA-type catalytic domain; it reads LAHAVDGLKP…APVQMWLDEL (417 aa). Y771 serves as the catalytic O-(5'-phospho-DNA)-tyrosine intermediate. The tract at residues 952-961 is interaction with DNA; the sequence is SLTQRIYING. Positions 1161-1184 are disordered; that stretch reads YVPPPPSKRPHVGQSVGGGGGGGS. Gly residues predominate over residues 1175 to 1184; the sequence is SVGGGGGGGS.

Belongs to the type II topoisomerase family. Homodimer. The cofactor is Mg(2+). Mn(2+) is required as a cofactor. It depends on Ca(2+) as a cofactor.

The protein localises to the nucleus. It carries out the reaction ATP-dependent breakage, passage and rejoining of double-stranded DNA.. Control of topological states of DNA by transient breakage and subsequent rejoining of DNA strands. Topoisomerase II makes double-strand breaks. The protein is DNA topoisomerase 2 (TOP2) of Trypanosoma cruzi.